Reading from the N-terminus, the 380-residue chain is Cytochrome b (380 aa).

4 consecutive transmembrane segments (helical) span residues 34 to 54, 78 to 99, 114 to 134, and 179 to 199; these read FGSL…LLAM, WLIR…YLHI, WNTG…GYVL, and FFAL…IHLT. Residues His-84 and His-98 each coordinate heme b. Heme b contacts are provided by His-183 and His-197. A ubiquinone is bound at residue His-202. The next 4 membrane-spanning stretches (helical) occupy residues 227–247, 289–309, 321–341, and 348–368; these read TKDL…ALFS, LGGV…PFLH, LSQI…WVGS, and FIII…ILFP.

The protein belongs to the cytochrome b family. As to quaternary structure, the cytochrome bc1 complex contains 11 subunits: 3 respiratory subunits (MT-CYB, CYC1 and UQCRFS1), 2 core proteins (UQCRC1 and UQCRC2) and 6 low-molecular weight proteins (UQCRH/QCR6, UQCRB/QCR7, UQCRQ/QCR8, UQCR10/QCR9, UQCR11/QCR10 and a cleavage product of UQCRFS1). This cytochrome bc1 complex then forms a dimer. Requires heme b as cofactor.

Its subcellular location is the mitochondrion inner membrane. In terms of biological role, component of the ubiquinol-cytochrome c reductase complex (complex III or cytochrome b-c1 complex) that is part of the mitochondrial respiratory chain. The b-c1 complex mediates electron transfer from ubiquinol to cytochrome c. Contributes to the generation of a proton gradient across the mitochondrial membrane that is then used for ATP synthesis. This Aerodramus vulcanorum (Volcano swiftlet) protein is Cytochrome b (MT-CYB).